Consider the following 359-residue polypeptide: Bergaptol O-methyltransferase (359 aa).

Residue H126 coordinates bergaptol. 5 residues coordinate S-adenosyl-L-homocysteine: S179, G203, D226, D246, and K260. H264 is a bergaptol binding site. The active-site Proton acceptor is the H264.

It belongs to the class I-like SAM-binding methyltransferase superfamily. Cation-independent O-methyltransferase family. COMT subfamily.

The enzyme catalyses a 5-hydroxyfurocoumarin + S-adenosyl-L-methionine = a 5-methoxyfurocoumarin + S-adenosyl-L-homocysteine + H(+). The catalysed reaction is bergaptol + S-adenosyl-L-methionine = bergapten + S-adenosyl-L-homocysteine. Inhibited by Cu(2+), Ni(2+) and Co(2+). The protein is Bergaptol O-methyltransferase of Glehnia littoralis (Beach silvertop).